The sequence spans 348 residues: Bifunctional nitrilase/nitrile hydratase NIT4B (348 aa).

Residues 29-300 (VRATVVQAST…EALISADLDL (272 aa)) enclose the CN hydrolase domain. The Proton acceptor role is filled by Glu-69. The Proton donor role is filled by Lys-156. The active-site Nucleophile is the Cys-190.

This sequence belongs to the carbon-nitrogen hydrolase superfamily. Nitrilase family. In terms of tissue distribution, expressed in roots, stems, cotyledons, leaves and flowers.

It carries out the reaction a nitrile + 2 H2O = a carboxylate + NH4(+). The catalysed reaction is 3-cyano-L-alanine + 2 H2O = L-aspartate + NH4(+). Highly specific for beta-cyano-L-alanine (Ala(CN)). Low activity with 3-phenylpropionitrile (PPN). Not associated with auxin production but may be involved in cyanide detoxification. This chain is Bifunctional nitrilase/nitrile hydratase NIT4B (NIT4B), found in Nicotiana tabacum (Common tobacco).